Reading from the N-terminus, the 298-residue chain is GTP cyclohydrolase FolE2 (298 aa).

Belongs to the GTP cyclohydrolase IV family.

The enzyme catalyses GTP + H2O = 7,8-dihydroneopterin 3'-triphosphate + formate + H(+). It functions in the pathway cofactor biosynthesis; 7,8-dihydroneopterin triphosphate biosynthesis; 7,8-dihydroneopterin triphosphate from GTP: step 1/1. Functionally, converts GTP to 7,8-dihydroneopterin triphosphate. This chain is GTP cyclohydrolase FolE2, found in Xylella fastidiosa (strain 9a5c).